Reading from the N-terminus, the 188-residue chain is Gamma-glutamylcyclotransferase (188 aa).

19-22 serves as a coordination point for substrate; sequence YFAY. Glutamate 98 serves as the catalytic Proton acceptor. Serine 173 carries the phosphoserine modification.

It belongs to the gamma-glutamylcyclotransferase family. Homodimer.

The catalysed reaction is an alpha-(gamma-L-glutamyl)-L-amino acid = 5-oxo-L-proline + an L-alpha-amino acid. In terms of biological role, catalyzes the formation of 5-oxoproline from gamma-glutamyl dipeptides and may play a significant role in glutathione homeostasis. Induces release of cytochrome c from mitochondria with resultant induction of apoptosis. In Mus musculus (Mouse), this protein is Gamma-glutamylcyclotransferase (Ggct).